We begin with the raw amino-acid sequence, 347 residues long: NADH-ubiquinone oxidoreductase chain 2 (347 aa).

The next 10 membrane-spanning stretches (helical) occupy residues 3 to 23, 25 to 45, 66 to 86, 93 to 115, 149 to 169, 178 to 198, 201 to 221, 237 to 257, 274 to 294, and 325 to 345; these read PPIL…VMLS, HWLL…PILM, ASML…QWVI, IASI…HFWV, INTN…GWGG, IMAY…TYNP, MILN…LFML, FPLI…LPPL, NMII…YFYL, and LLPP…MLSV.

Belongs to the complex I subunit 2 family. As to quaternary structure, core subunit of respiratory chain NADH dehydrogenase (Complex I) which is composed of 45 different subunits. Interacts with TMEM242.

It is found in the mitochondrion inner membrane. The catalysed reaction is a ubiquinone + NADH + 5 H(+)(in) = a ubiquinol + NAD(+) + 4 H(+)(out). Functionally, core subunit of the mitochondrial membrane respiratory chain NADH dehydrogenase (Complex I) which catalyzes electron transfer from NADH through the respiratory chain, using ubiquinone as an electron acceptor. Essential for the catalytic activity and assembly of complex I. This chain is NADH-ubiquinone oxidoreductase chain 2, found in Canis lupus (Gray wolf).